Reading from the N-terminus, the 203-residue chain is Peptidyl-tRNA hydrolase (203 aa).

Y18 contacts tRNA. The Proton acceptor role is filled by H23. The tRNA site is built by Y69, N71, and N117.

It belongs to the PTH family. As to quaternary structure, monomer.

The protein resides in the cytoplasm. It catalyses the reaction an N-acyl-L-alpha-aminoacyl-tRNA + H2O = an N-acyl-L-amino acid + a tRNA + H(+). Hydrolyzes ribosome-free peptidyl-tRNAs (with 1 or more amino acids incorporated), which drop off the ribosome during protein synthesis, or as a result of ribosome stalling. In terms of biological role, catalyzes the release of premature peptidyl moieties from peptidyl-tRNA molecules trapped in stalled 50S ribosomal subunits, and thus maintains levels of free tRNAs and 50S ribosomes. The chain is Peptidyl-tRNA hydrolase from Parasynechococcus marenigrum (strain WH8102).